We begin with the raw amino-acid sequence, 100 residues long: Putative PIN1-like protein (100 aa).

Residues 1–15 (MADEEKLPPGWEKRM) are compositionally biased toward basic and acidic residues. Disordered regions lie at residues 1 to 52 (MADE…QGEP) and 69 to 100 (LDLA…REGL). The WW domain maps to 5–38 (EKLPPGWEKRMSRPSGRGYYFNHITNPSQWERPS). Residues 27–44 (HITNPSQWERPSGNSSSG) are compositionally biased toward polar residues. The span at 87–100 (QRLHPEDQGRREGL) shows a compositional bias: basic and acidic residues.

This chain is Putative PIN1-like protein (PIN1P1), found in Homo sapiens (Human).